The following is a 63-amino-acid chain: Small ribosomal subunit protein eS17 (63 aa).

It belongs to the eukaryotic ribosomal protein eS17 family.

The sequence is that of Small ribosomal subunit protein eS17 from Methanococcus maripaludis (strain C6 / ATCC BAA-1332).